A 604-amino-acid chain; its full sequence is Lipoprotein LpqB (604 aa).

Positions Met-1–Gly-27 are cleaved as a signal peptide. Cys-28 is lipidated: N-palmitoyl cysteine. Cys-28 carries the S-diacylglycerol cysteine lipid modification. The tract at residues Ser-35–Asp-60 is disordered.

Belongs to the LpqB lipoprotein family.

It is found in the cell membrane. The sequence is that of Lipoprotein LpqB from Nocardia farcinica (strain IFM 10152).